Here is a 308-residue protein sequence, read N- to C-terminus: Aspartate carbamoyltransferase catalytic subunit (308 aa).

Residues Arg-51 and Thr-52 each contribute to the carbamoyl phosphate site. Lys-80 is an L-aspartate binding site. Carbamoyl phosphate contacts are provided by Arg-101, His-129, and Gln-132. Arg-162 and Arg-224 together coordinate L-aspartate. The carbamoyl phosphate site is built by Leu-263 and Pro-264.

This sequence belongs to the aspartate/ornithine carbamoyltransferase superfamily. ATCase family. In terms of assembly, heterododecamer (2C3:3R2) of six catalytic PyrB chains organized as two trimers (C3), and six regulatory PyrI chains organized as three dimers (R2).

The catalysed reaction is carbamoyl phosphate + L-aspartate = N-carbamoyl-L-aspartate + phosphate + H(+). It functions in the pathway pyrimidine metabolism; UMP biosynthesis via de novo pathway; (S)-dihydroorotate from bicarbonate: step 2/3. Its function is as follows. Catalyzes the condensation of carbamoyl phosphate and aspartate to form carbamoyl aspartate and inorganic phosphate, the committed step in the de novo pyrimidine nucleotide biosynthesis pathway. The polypeptide is Aspartate carbamoyltransferase catalytic subunit (Bacteroides fragilis (strain ATCC 25285 / DSM 2151 / CCUG 4856 / JCM 11019 / LMG 10263 / NCTC 9343 / Onslow / VPI 2553 / EN-2)).